Consider the following 424-residue polypeptide: L-glutamine:scyllo-inosose aminotransferase (424 aa).

The tract at residues 1-21 (MDSSLAISGGPRLSNREWPRW) is disordered. K202 carries the N6-(pyridoxal phosphate)lysine modification.

This sequence belongs to the DegT/DnrJ/EryC1 family. L-glutamine:2-deoxy-scyllo-inosose/scyllo-inosose aminotransferase subfamily. As to quaternary structure, homodimer. The cofactor is pyridoxal 5'-phosphate.

The enzyme catalyses scyllo-inosose + L-glutamine = 1-amino-1-deoxy-scyllo-inositol + 2-oxoglutaramate. It functions in the pathway antibiotic biosynthesis; streptomycin biosynthesis. Its function is as follows. Catalyzes the PLP-dependent transamination of scyllo-inosose to form scyllo-inosamine. The chain is L-glutamine:scyllo-inosose aminotransferase (stsC) from Streptomyces griseus.